The primary structure comprises 356 residues: Alanine racemase (356 aa).

The active-site Proton acceptor; specific for D-alanine is K35. K35 carries the post-translational modification N6-(pyridoxal phosphate)lysine. R130 is a substrate binding site. Catalysis depends on Y253, which acts as the Proton acceptor; specific for L-alanine. Residue M301 participates in substrate binding.

This sequence belongs to the alanine racemase family. Pyridoxal 5'-phosphate is required as a cofactor.

The enzyme catalyses L-alanine = D-alanine. Its pathway is amino-acid biosynthesis; D-alanine biosynthesis; D-alanine from L-alanine: step 1/1. Catalyzes the interconversion of L-alanine and D-alanine. May also act on other amino acids. This Paraburkholderia phytofirmans (strain DSM 17436 / LMG 22146 / PsJN) (Burkholderia phytofirmans) protein is Alanine racemase (alr).